The sequence spans 672 residues: PHD finger protein MALE STERILITY 1 (672 aa).

A PHD-type zinc finger spans residues 614-664; sequence RIECECGATEEDGERMVCCDICEVWQHTRCVGVQHNEEVPRIFLCQSCDQH.

In closed flower buds, especially in anthers.

Its subcellular location is the nucleus. Its function is as follows. Transcriptional activator required for anther and post-meiotic pollen development and maturation. Seems to regulate inflorescence branching and floral development. May control tapetal development by directly regulating tapetal programmed cell death (PCD) and breakdown. Implicated in pollen cytosolic components and wall development (e.g. exine and intine formation). This chain is PHD finger protein MALE STERILITY 1 (MS1), found in Arabidopsis thaliana (Mouse-ear cress).